A 2202-amino-acid polypeptide reads, in one-letter code: MALPRLTGALRSFSNVTKQDNYNEEVADLKIKRSKLHEQVLDLGLTWKKIIKFLNEKLEKSKMQSINEDLKDILHAAKQIVGTDNGREAIESGAAFLFMTFHLKDSVGHKETKAIKQMFGPFPSSSATAACNATNRIISHFSQDDLTALVQMTEKEHGDRVFFGKNLAFSFDMHDLDHFDELPINGETQKTISLDYKKFLNEHLQEACTPELKPVEKTNGSFLWCEVEKYLNSTLKEMTEVPRVEDLCCTLYDMLASIKSGDELQDELFELLGPEGLELIEKLLQNRITIVDRFLNSSNDHRFQALQDNCKKILGENAKPNYGCQVTIQSEQEKQLMKQYRREEKRIARREKKAGEDLEVSEGLMCFDPKELRIQREQALLNARSVPILSRQRDADVEKIHYPHVYDSQAEAMKTSAFIAGAKMILPEGIQRENNKLYEEVRIPYSEPMPLSFEEKPVYIQDLDEIGQLAFKGMKRLNRIQSIVFETAYNTNENMLICAPTGAGKTNIAMLTVLHEIRQHFQQGVIKKNEFKIVYVAPMKALAAEMTDYFSRRLEPLGIIVKELTGDMQLSKSEILRTQMLVTTPEKWDVVTRKSVGDVALSQIVRLLILDEVHLLHEDRGPVLESIVARTLRQVESTQSMIRILGLSATLPNYLDVATFLHVNPYIGLFFFDGRFRPVPLGQTFLGIKCANKMQQLNNMDEVCYENVLKQVKAGHQVMVFVHARNATVRTAMSLIERAKNCGHIPFFFPTQGHDYVLAEKQVQRSRNKQVRELFPDGFSIHHAGMLRQDRNLVENLFSNGHIKVLVCTATLAWGVNLPAHAVIIKGTQIYAAKRGSFVDLGILDVMQIFGRAGRPQFDKFGEGIIITTHDKLSHYLTLLTQRNPIESQFLESLADNLNAEIALGTVTNVEEAVKWISYTYLYVRMRANPLAYGISHKAYQIDPTLRKHREQLVIEVGRKLDKAQMIRFEERTGYFSSTDLGRTASHYYIKYNTIETFNELFDAHKTEGDIFAIVSKAEEFDQIKVREEEIEELDTLLSNFCELSTPGGVENSYGKINILLQTYISRGEMDSFSLISDSAYVAQNAARIVRALFEIALRKRWPTMTYRLLNLSKVIDKRLWGWASPLRQFSILPPHILTRLEEKKLTVDKLKDMRKDEIGHILHHVNIGLKVKQCVHQIPSVMMEASIQPITRTVLRVTLSIYADFTWNDQVHGTVGEPWWIWVEDPTNDHIYHSEYFLALKKQVISKEAQLLVFTIPIFEPLPSQYYIRAVSDRWLGAEAVCIINFQHLILPERHPPHTELLDLQPLPITALGCKAYEALYNFSHFNPVQTQIFHTLYHTDCNVLLGAPTGSGKTVAAELAIFRVFNKYPTSKAVYIAPLKALVRERMDDWKVRIEEKLGKKVIELTGDVTPDMKSIAKADLIVTTPEKWDGVSRSWQNRNYVQQVTILIIDEIHLLGEERGPVLEVIVSRTNFISSHTEKPVRIVGLSTALANARDLADWLNIKQMGLFNFRPSVRPVPLEVHIQGFPGQHYCPRMASMNKPAFQAIRSHSPAKPVLIFVSSRRQTRLTALELIAFLATEEDPKQWLNMDEREMENIIATVRDSNLKLTLAFGIGMHHAGLHERDRKTVEELFVNCKVQVLIATSTLAWGVNFPAHLVIIKGTEYYDGKTRRYVDFPITDVLQMMGRAGRPQFDDQGKAVILVHDIKKDFYKKFLYEPFPVESSLLGVLSDHLNAEIAGGTITSKQDALDYITWTYFFRRLIMNPSYYNLGDVSHDSVNKFLSHLIEKSLIELELSYCIEIGEDNRSIEPLTYGRIASYYYLKHQTVKMFKDRLKPECSTEELLSILSDAEEYTDLPVRHNEDHMNSELAKCLPIESNPHSFDSPHTKAHLLLQAHLSRAMLPCPDYDTDTKTVLDQALRVCQAMLDVAANQGWLVTVLNITNLIQMVIQGRWLKDSSLLTLPNIENHHLHLFKKWKPIMKGPHARGRTSIESLPELIHACGGKDHVFSSMVESELHAAKTKQAWNFLSHLPVINVGISVKGSWDDLVEGHNELSVSTLTADKRDDNKWIKLHADQEYVLQVSLQRVHFGFHKGKPESCAVTPRFPKSKDEGWFLILGEVDKRELIALKRVGYIRNHHVASLSFYTPEIPGRYIYTLYFMSDCYLGLDQQYDIYLNVTQASLSAQVNTKVSDSLTDLALK.

Positions 1–400 (MALPRLTGAL…RQRDADVEKI (400 aa)) are required for interaction with ASCC2. Ser12 is subject to Phosphoserine. Coiled coils occupy residues 18-79 (KQDN…AAKQ) and 328-356 (IQSE…KAGE). Residues 486–669 (ETAYNTNENM…FLHVNPYIGL (184 aa)) enclose the Helicase ATP-binding 1 domain. 499–506 (APTGAGKT) is a binding site for ATP. Lys572 carries the N6-acetyllysine modification. Residues 611 to 614 (DEVH) carry the DEVH box motif. Residues 728 to 914 (TVRTAMSLIE…GTVTNVEEAV (187 aa)) form the Helicase C-terminal 1 domain. One can recognise an SEC63 1 domain in the interval 978–1287 (STDLGRTASH…GAEAVCIINF (310 aa)). The 176-residue stretch at 1336 to 1511 (HTLYHTDCNV…WLNIKQMGLF (176 aa)) folds into the Helicase ATP-binding 2 domain. 1349-1356 (APTGSGKT) is a binding site for ATP. The short motif at 1453-1456 (DEIH) is the DEIH box element. One can recognise a Helicase C-terminal 2 domain in the interval 1544–1739 (PAFQAIRSHS…VLSDHLNAEI (196 aa)). In terms of domain architecture, SEC63 2 spans 1812-2176 (PLTYGRIASY…LGLDQQYDIY (365 aa)). Ser2195 is subject to Phosphoserine.

This sequence belongs to the helicase family. Identified in the ASCC complex that contains ASCC1, ASCC2 and ASCC3. Functions as scaffolding subunit that interacts directly with both ASCC1 and ASCC2. Interacts directly with ALKBH3, and thereby recruits ALKBH3 to the ASCC complex. Part of the ASC-1/TRIP4 complex, that contains TRIP4, ASCC1, ASCC2 and ASCC3. Part of the RQT (ribosome quality control trigger) complex, that contains ASCC2, ASCC3 and TRIP4. Associates with ribosomes; recruited to collided ribosomes. Interacts with ZCCHC4. Interacts with ZNF598. Interacts with RPS3. Ubiquitous.

It localises to the nucleus. It is found in the nucleus speckle. Its subcellular location is the cytoplasm. The protein resides in the cytosol. The enzyme catalyses Couples ATP hydrolysis with the unwinding of duplex DNA by translocating in the 3'-5' direction.. It carries out the reaction ATP + H2O = ADP + phosphate + H(+). Its function is as follows. ATPase involved both in DNA repair and rescue of stalled ribosomes. 3'-5' DNA helicase involved in repair of alkylated DNA: promotes DNA unwinding to generate single-stranded substrate needed for ALKBH3, enabling ALKBH3 to process alkylated N3-methylcytosine (3mC) within double-stranded regions. Also involved in activation of the ribosome quality control (RQC) pathway, a pathway that degrades nascent peptide chains during problematic translation. Drives the splitting of stalled ribosomes that are ubiquitinated in a ZNF598-dependent manner, as part of the ribosome quality control trigger (RQT) complex. Part of the ASC-1 complex that enhances NF-kappa-B, SRF and AP1 transactivation. The protein is Activating signal cointegrator 1 complex subunit 3 (ASCC3) of Homo sapiens (Human).